Consider the following 295-residue polypeptide: Small ribosomal subunit protein uS2 (295 aa).

The tract at residues Lys264–Ala295 is disordered.

The protein belongs to the universal ribosomal protein uS2 family.

In Rickettsia akari (strain Hartford), this protein is Small ribosomal subunit protein uS2.